Consider the following 948-residue polypeptide: UvrABC system protein A (948 aa).

33-40 (GLSGSGKS) lines the ATP pocket. Residues 252 to 279 (CPICGFSIGELEPRMFSFNSPFGACPTC) form a C4-type zinc finger. ABC transporter domains follow at residues 309–587 (WIPT…KKSL) and 607–935 (ASDR…KYLK). 639-646 (GVSGSGKS) is an ATP binding site. Residues 738–764 (CEACKGDGIIKIEMHFLPDVYVPCEVC) form a C4-type zinc finger.

This sequence belongs to the ABC transporter superfamily. UvrA family. In terms of assembly, forms a heterotetramer with UvrB during the search for lesions.

The protein localises to the cytoplasm. In terms of biological role, the UvrABC repair system catalyzes the recognition and processing of DNA lesions. UvrA is an ATPase and a DNA-binding protein. A damage recognition complex composed of 2 UvrA and 2 UvrB subunits scans DNA for abnormalities. When the presence of a lesion has been verified by UvrB, the UvrA molecules dissociate. The protein is UvrABC system protein A of Staphylococcus aureus (strain N315).